The sequence spans 308 residues: Isoaspartyl peptidase/L-asparaginase (308 aa).

Position 1 is an N-acetylmethionine (methionine 1). Catalysis depends on threonine 168, which acts as the Nucleophile. Substrate contacts are provided by residues 196 to 199 (RVGD) and 219 to 222 (TGHG).

It belongs to the Ntn-hydrolase family. In terms of assembly, heterodimer of an alpha and beta chain produced by autocleavage. This heterodimer may then dimerize in turn, giving rise to a heterotetramer. Cleaved into an alpha and beta chain by autocatalysis; this activates the enzyme. The N-terminal residue of the beta subunit is responsible for the nucleophile hydrolase activity.

It is found in the cytoplasm. The catalysed reaction is L-asparagine + H2O = L-aspartate + NH4(+). The enzyme catalyses Cleavage of a beta-linked Asp residue from the N-terminus of a polypeptide.. Its function is as follows. Has both L-asparaginase and beta-aspartyl peptidase activity. May be involved in the production of L-aspartate, which can act as an excitatory neurotransmitter in some brain regions. Is highly active with L-Asp beta-methyl ester. Besides, has catalytic activity toward beta-aspartyl dipeptides and their methyl esters, including beta-L-Asp-L-Phe, beta-L-Asp-L-Phe methyl ester (aspartame), beta-L-Asp-L-Ala, beta-L-Asp-L-Leu and beta-L-Asp-L-Lys. Does not have aspartylglucosaminidase activity and is inactive toward GlcNAc-L-Asn. Likewise, has no activity toward glutamine. The polypeptide is Isoaspartyl peptidase/L-asparaginase (ASRGL1) (Bos taurus (Bovine)).